A 220-amino-acid polypeptide reads, in one-letter code: Metalloproteinase inhibitor 2 (220 aa).

The first 26 residues, 1 to 26, serve as a signal peptide directing secretion; the sequence is MGAAARTLRLALGLLLLATLLRPADA. Residue cysteine 27 coordinates Zn(2+). Involved in metalloproteinase-binding regions lie at residues 27–30 and 95–96; these read CSCS and SA. 6 disulfide bridges follow: cysteine 27/cysteine 98, cysteine 29/cysteine 127, cysteine 39/cysteine 152, cysteine 154/cysteine 201, cysteine 159/cysteine 164, and cysteine 172/cysteine 193. In terms of domain architecture, NTR spans 27–152; the sequence is CSCSPVHPQQ…SLNHRYQMGC (126 aa).

This sequence belongs to the protease inhibitor I35 (TIMP) family. Interacts (via the C-terminal) with MMP2 (via the C-terminal PEX domain); the interaction inhibits the MMP2 activity. The activity of TIMP2 is dependent on the presence of disulfide bonds.

It localises to the secreted. Its function is as follows. Complexes with metalloproteinases (such as collagenases) and irreversibly inactivates them by binding to their catalytic zinc cofactor. Known to act on MMP-1, MMP-2, MMP-3, MMP-7, MMP-8, MMP-9, MMP-10, MMP-13, MMP-14, MMP-15, MMP-16 and MMP-19. The protein is Metalloproteinase inhibitor 2 (TIMP2) of Homo sapiens (Human).